Consider the following 162-residue polypeptide: NADH-quinone oxidoreductase subunit I 2 (162 aa).

4Fe-4S ferredoxin-type domains are found at residues 53–83 (LRRY…IESE) and 93–122 (TRYD…ETRI). Cysteine 63, cysteine 66, cysteine 69, cysteine 73, cysteine 102, cysteine 105, cysteine 108, and cysteine 112 together coordinate [4Fe-4S] cluster.

The protein belongs to the complex I 23 kDa subunit family. In terms of assembly, NDH-1 is composed of 14 different subunits. Subunits NuoA, H, J, K, L, M, N constitute the membrane sector of the complex. The cofactor is [4Fe-4S] cluster.

It localises to the cell inner membrane. The enzyme catalyses a quinone + NADH + 5 H(+)(in) = a quinol + NAD(+) + 4 H(+)(out). NDH-1 shuttles electrons from NADH, via FMN and iron-sulfur (Fe-S) centers, to quinones in the respiratory chain. The immediate electron acceptor for the enzyme in this species is believed to be ubiquinone. Couples the redox reaction to proton translocation (for every two electrons transferred, four hydrogen ions are translocated across the cytoplasmic membrane), and thus conserves the redox energy in a proton gradient. The chain is NADH-quinone oxidoreductase subunit I 2 from Nitrosospira multiformis (strain ATCC 25196 / NCIMB 11849 / C 71).